Reading from the N-terminus, the 124-residue chain is Ribonuclease pancreatic (124 aa).

Residues 1–13 (KESAAAKFERQHM) show a composition bias toward basic and acidic residues. The disordered stretch occupies residues 1–24 (KESAAAKFERQHMDPSMSSASSSN). Residues K7 and R10 each contribute to the substrate site. Catalysis depends on H12, which acts as the Proton acceptor. 4 disulfides stabilise this stretch: C26/C84, C40/C95, C58/C110, and C65/C72. Residues 41-45 (KPVNT), K66, and R85 contribute to the substrate site. The Proton donor role is filled by H119.

The protein belongs to the pancreatic ribonuclease family. As to quaternary structure, monomer. Interacts with and forms tight 1:1 complexes with RNH1. Dimerization of two such complexes may occur. Interaction with RNH1 inhibits this protein. In terms of tissue distribution, pancreas.

The protein localises to the secreted. It carries out the reaction an [RNA] containing cytidine + H2O = an [RNA]-3'-cytidine-3'-phosphate + a 5'-hydroxy-ribonucleotide-3'-[RNA].. The catalysed reaction is an [RNA] containing uridine + H2O = an [RNA]-3'-uridine-3'-phosphate + a 5'-hydroxy-ribonucleotide-3'-[RNA].. Its function is as follows. Endonuclease that catalyzes the cleavage of RNA on the 3' side of pyrimidine nucleotides. Acts on single-stranded and double-stranded RNA. The polypeptide is Ribonuclease pancreatic (RNASE1) (Dama dama (Fallow deer)).